Here is a 140-residue protein sequence, read N- to C-terminus: ATP synthase epsilon chain (140 aa).

This sequence belongs to the ATPase epsilon chain family. In terms of assembly, F-type ATPases have 2 components, CF(1) - the catalytic core - and CF(0) - the membrane proton channel. CF(1) has five subunits: alpha(3), beta(3), gamma(1), delta(1), epsilon(1). CF(0) has three main subunits: a, b and c.

It localises to the cell inner membrane. Produces ATP from ADP in the presence of a proton gradient across the membrane. The sequence is that of ATP synthase epsilon chain from Nitrosococcus oceani (strain ATCC 19707 / BCRC 17464 / JCM 30415 / NCIMB 11848 / C-107).